A 168-amino-acid polypeptide reads, in one-letter code: MAPPPPSLASRMAALILRILTFIFLIASLVILTTNTATLELDLVEVKVHFKDVYAYRYMLATIVIGLAYTVLQIAFTLYYVATGNRMMSGDGNLAFDFFGDKVISYILVTGAAAGFASTKDIKPVFSGSGDFDAFINKGYASASLLLIGFVCTAVLSVFSSYALPKQV.

Residues 1–11 (MAPPPPSLASR) lie on the Cytoplasmic side of the membrane. The helical transmembrane segment at 12 to 32 (MAALILRILTFIFLIASLVIL) threads the bilayer. Over 33–57 (TTNTATLELDLVEVKVHFKDVYAYR) the chain is Extracellular. A helical transmembrane segment spans residues 58 to 78 (YMLATIVIGLAYTVLQIAFTL). Topologically, residues 79-97 (YYVATGNRMMSGDGNLAFD) are cytoplasmic. Residues 98–118 (FFGDKVISYILVTGAAAGFAS) traverse the membrane as a helical segment. At 119-144 (TKDIKPVFSGSGDFDAFINKGYASAS) the chain is on the extracellular side. The chain crosses the membrane as a helical span at residues 145 to 165 (LLLIGFVCTAVLSVFSSYALP). Over 166–168 (KQV) the chain is Cytoplasmic.

The protein belongs to the Casparian strip membrane proteins (CASP) family. Homodimer and heterodimers.

It is found in the cell membrane. The chain is CASP-like protein 4D1 from Ricinus communis (Castor bean).